The primary structure comprises 210 residues: Large ribosomal subunit protein uL3 (210 aa).

The tract at residues 131 to 154 (GPMSHGSKYHRRVGSMGATTDPGR) is disordered.

It belongs to the universal ribosomal protein uL3 family. Part of the 50S ribosomal subunit. Forms a cluster with proteins L14 and L19.

In terms of biological role, one of the primary rRNA binding proteins, it binds directly near the 3'-end of the 23S rRNA, where it nucleates assembly of the 50S subunit. This chain is Large ribosomal subunit protein uL3, found in Thermoanaerobacter pseudethanolicus (strain ATCC 33223 / 39E) (Clostridium thermohydrosulfuricum).